A 353-amino-acid polypeptide reads, in one-letter code: Photosystem II D2 protein (353 aa).

The residue at position 2 (T2) is an N-acetylthreonine. A Phosphothreonine modification is found at T2. A helical membrane pass occupies residues 41–61 (CAYFALGGWFTGTTFVTSWYT). H118 contacts chlorophyll a. Residues 125–141 (GFMLRQFELARSVQLRP) traverse the membrane as a helical segment. 2 residues coordinate pheophytin a: Q130 and N143. A helical transmembrane segment spans residues 153-166 (VFVSVFLIYPLGQS). H198 serves as a coordination point for chlorophyll a. A helical membrane pass occupies residues 208 to 228 (AALLCAIHGATVENTLFEDGD). The a plastoquinone site is built by H215 and F262. Residue H215 coordinates Fe cation. H269 serves as a coordination point for Fe cation. A helical transmembrane segment spans residues 279 to 295 (GLWMSALGVVGLALNLR).

This sequence belongs to the reaction center PufL/M/PsbA/D family. In terms of assembly, PSII is composed of 1 copy each of membrane proteins PsbA, PsbB, PsbC, PsbD, PsbE, PsbF, PsbH, PsbI, PsbJ, PsbK, PsbL, PsbM, PsbT, PsbX, PsbY, PsbZ, Psb30/Ycf12, at least 3 peripheral proteins of the oxygen-evolving complex and a large number of cofactors. It forms dimeric complexes. The D1/D2 heterodimer binds P680, chlorophylls that are the primary electron donor of PSII, and subsequent electron acceptors. It shares a non-heme iron and each subunit binds pheophytin, quinone, additional chlorophylls, carotenoids and lipids. There is also a Cl(-1) ion associated with D1 and D2, which is required for oxygen evolution. The PSII complex binds additional chlorophylls, carotenoids and specific lipids. is required as a cofactor.

It is found in the plastid. It localises to the chloroplast thylakoid membrane. It catalyses the reaction 2 a plastoquinone + 4 hnu + 2 H2O = 2 a plastoquinol + O2. Functionally, photosystem II (PSII) is a light-driven water:plastoquinone oxidoreductase that uses light energy to abstract electrons from H(2)O, generating O(2) and a proton gradient subsequently used for ATP formation. It consists of a core antenna complex that captures photons, and an electron transfer chain that converts photonic excitation into a charge separation. The D1/D2 (PsbA/PsbD) reaction center heterodimer binds P680, the primary electron donor of PSII as well as several subsequent electron acceptors. D2 is needed for assembly of a stable PSII complex. The protein is Photosystem II D2 protein of Aethionema grandiflorum (Persian stone-cress).